A 1724-amino-acid polypeptide reads, in one-letter code: Protein CHROMATIN REMODELING 5 (1724 aa).

Disordered stretches follow at residues 24–88 and 104–415; these read QNAA…QSST and DCQP…DDIE. A compositionally biased stretch (polar residues) spans 25–34; that stretch reads NAATFQSSPL. Basic and acidic residues predominate over residues 126 to 144; sequence EAYHSEDNHSNDRSEKLDS. The stretch at 138–164 forms a coiled coil; it reads RSEKLDSENENDNENEEEDNEMNKHQS. Composition is skewed to acidic residues over residues 145 to 157, 170 to 186, 239 to 264, and 278 to 297; these read ENEN…EEDN, PADE…DEDN, ADMD…DAAD, and VSDE…YEDD. The segment covering 301-313 has biased composition (basic residues); sequence KKPKVRQQSKGFR. The Nuclear localization signal 1 motif lies at 320–327; the sequence is ERKSFHVS. The span at 337–350 shows a compositional bias: acidic residues; it reads QDDDSEEDSENDND. The segment covering 362 to 376 has biased composition (polar residues); the sequence is TLRQNNGRSTNTIGQ. Residues 403 to 412 are compositionally biased toward basic and acidic residues; it reads DGKNRKNQKD. In terms of domain architecture, Chromo 1 spans 420–499; it reads DVIEKVLWHQ…FKKVLNYTKK (80 aa). Positions 505–525 form a coiled coil; that stretch reads RYRTALSREEIEVNDVSKEMD. The 65-residue stretch at 533 to 597 folds into the Chromo 2 domain; sequence SQVERIIADR…REVSIAVQGK (65 aa). One can recognise a Helicase ATP-binding domain in the interval 637–809; that stretch reads VNSWLNDTNV…WALLHFLDPG (173 aa). Residue 650–657 participates in ATP binding; that stretch reads DEMGLGKT. The DEAH box signature appears at 760–763; that stretch reads DEAH. The Helicase C-terminal domain occupies 943-1094; it reads ILDKLLVRLR…HLVIQKLNAE (152 aa). The stretch at 1126 to 1163 forms a coiled coil; the sequence is KEDKNDEESKKRLLSMDIDEILERAEQVEEKHTDETEH. The tract at residues 1199–1245 is disordered; that stretch reads ALAPRAARNTKSYVDPSHPDRTSKRKKKGSEPPEHTERSQKRRKTEY. 2 short sequence motifs (nuclear localization signal) span residues 1224-1231 and 1348-1355; these read KKKGSEPP and LKRVQGLQ. The segment covering 1227-1237 has biased composition (basic and acidic residues); sequence GSEPPEHTERS. Disordered stretches follow at residues 1480–1524 and 1654–1724; these read QFKA…EMSD and KFKT…FPPR. The segment covering 1504–1520 has biased composition (basic and acidic residues); it reads DGPRKTQKAEPLVKEEG. The segment covering 1658–1667 has biased composition (polar residues); that stretch reads AGNSQGSQQV. Positions 1669 to 1691 are enriched in basic and acidic residues; the sequence is KGIDTAKFEAWKRRRRTENDVQT. The span at 1692 to 1702 shows a compositional bias: polar residues; it reads ERPTITNSNSL.

This sequence belongs to the SNF2/RAD54 helicase family.

The protein resides in the nucleus. Functionally, DNA-binding helicase that specifically binds to the promoter of target genes, leading to chromatin remodeling, possibly by promoting deposition of histone H3.3. Probable chromatin remodeling factor. This Arabidopsis thaliana (Mouse-ear cress) protein is Protein CHROMATIN REMODELING 5.